The sequence spans 292 residues: Syntaxin-19 (292 aa).

Positions 1–24 are enriched in basic and acidic residues; the sequence is MKDRLPELKQRTKETELSKDKDVP. Residues 1 to 28 form a disordered region; that stretch reads MKDRLPELKQRTKETELSKDKDVPTTEA. Residues 46–122 are a coiled coil; the sequence is VAERHLHEIQ…VKEVKKSEDE (77 aa). Residues 209-271 form the t-SNARE coiled-coil homology domain; it reads LSEIEQRHKE…NTTKEKFGLA (63 aa).

The protein belongs to the syntaxin family. In terms of assembly, interacts with EGFR.

The protein resides in the cell membrane. The protein localises to the cytoplasm. Plays a role in endosomal trafficking of the epidermal growth factor receptor (EGFR). The sequence is that of Syntaxin-19 (STX19) from Bos taurus (Bovine).